Here is a 335-residue protein sequence, read N- to C-terminus: Zinc finger protein 396 (335 aa).

The SCAN box domain occupies 52-134; that stretch reads RQQFRQFGYQ…TMLEDVEREL (83 aa). C2H2-type zinc fingers lie at residues 251 to 273, 279 to 301, and 307 to 329; these read QKCDECGKIFSQSSALILHQRIH, YACDECAKAFSRSAILIQHRRTH, and YKCHDCGKAFSQSSNLFRHRKRH.

This sequence belongs to the krueppel C2H2-type zinc-finger protein family. In terms of assembly, isoforms 1 and 2 can both homo- and hetero-associate. Expressed strongly in liver, moderately in skeletal muscle and weakly in kidney, pancreas, spleen and prostate.

The protein localises to the nucleus. It localises to the cytoplasm. Isoform 1 and isoform 2 act as DNA-dependent transcriptional repressors. This chain is Zinc finger protein 396 (ZNF396), found in Homo sapiens (Human).